Here is a 122-residue protein sequence, read N- to C-terminus: UPF0102 protein Smed_3545 (122 aa).

The protein belongs to the UPF0102 family.

The polypeptide is UPF0102 protein Smed_3545 (Sinorhizobium medicae (strain WSM419) (Ensifer medicae)).